The sequence spans 324 residues: D-alanine--D-alanine ligase (324 aa).

An ATP-grasp domain is found at 121 to 321 (NQYLKAFGVR…IKDVMTDIIE (201 aa)). 149–204 (MEKIGLPCFIKPSLGGSSFGVTKVKTKEQIQPAIVKAFEEAQEVLVEAFMEGTELT) is an ATP binding site. Mg(2+) contacts are provided by Asp-275, Glu-288, and Asn-290.

The protein belongs to the D-alanine--D-alanine ligase family. It depends on Mg(2+) as a cofactor. The cofactor is Mn(2+).

Its subcellular location is the cytoplasm. The enzyme catalyses 2 D-alanine + ATP = D-alanyl-D-alanine + ADP + phosphate + H(+). It participates in cell wall biogenesis; peptidoglycan biosynthesis. Functionally, cell wall formation. The polypeptide is D-alanine--D-alanine ligase (Bacteroides thetaiotaomicron (strain ATCC 29148 / DSM 2079 / JCM 5827 / CCUG 10774 / NCTC 10582 / VPI-5482 / E50)).